The primary structure comprises 375 residues: L-asparaginase 2 (375 aa).

The signal sequence occupies residues 1-19 (MKKQRMLVLFTALLFVFTG). Residues 22-46 (HSPETKESPKEKAQTQKVSSASASE) form a disordered region. Basic and acidic residues predominate over residues 24–35 (PETKESPKEKAQ). An Asparaginase/glutaminase domain is found at 51-375 (PNIRILATGG…QKIQAYFNEY (325 aa)). Catalysis depends on T61, which acts as the O-isoaspartyl threonine intermediate. Substrate-binding positions include S108 and 141–142 (TD).

This sequence belongs to the asparaginase 1 family. As to quaternary structure, homotetramer.

It catalyses the reaction L-asparagine + H2O = L-aspartate + NH4(+). Its function is as follows. Catalyzes the conversion of L-asparagine to L-aspartate and ammonium. This is L-asparaginase 2 (ansZ) from Bacillus subtilis (strain 168).